Reading from the N-terminus, the 355-residue chain is Phytoene synthase (355 aa).

It belongs to the phytoene/squalene synthase family. ATP serves as cofactor. The cofactor is Mn(2+). It depends on Mg(2+) as a cofactor.

It participates in carotenoid biosynthesis; phytoene biosynthesis. Its function is as follows. Involved in the biosynthesis of carotenoids. Catalyzes the condensation of two molecules of geranylgeranyl diphosphate (GGPP) to give prephytoene diphosphate (PPPP) and the subsequent rearrangement of the cyclopropylcarbinyl intermediate to yield phytoene. The sequence is that of Phytoene synthase (crtB) from Cereibacter sphaeroides (strain ATCC 17023 / DSM 158 / JCM 6121 / CCUG 31486 / LMG 2827 / NBRC 12203 / NCIMB 8253 / ATH 2.4.1.) (Rhodobacter sphaeroides).